The primary structure comprises 357 residues: Histidine biosynthesis bifunctional protein HisB (357 aa).

The histidinol-phosphatase stretch occupies residues 1–168; the sequence is MSEKVLFIDR…IVFKLTKKHD (168 aa). The active-site Nucleophile is Asp-9. Mg(2+) contacts are provided by Asp-9 and Asp-11. The active-site Proton donor is the Asp-11. Zn(2+) contacts are provided by Cys-93, His-95, Cys-101, and Cys-103. Asp-130 provides a ligand contact to Mg(2+). Residues 169–357 form an imidazoleglycerol-phosphate dehydratase region; sequence RHAKVVRNTK…KNLPSSKGLL (189 aa).

In the N-terminal section; belongs to the histidinol-phosphatase family. It in the C-terminal section; belongs to the imidazoleglycerol-phosphate dehydratase family. The cofactor is Mg(2+). Zn(2+) serves as cofactor.

Its subcellular location is the cytoplasm. It carries out the reaction D-erythro-1-(imidazol-4-yl)glycerol 3-phosphate = 3-(imidazol-4-yl)-2-oxopropyl phosphate + H2O. The enzyme catalyses L-histidinol phosphate + H2O = L-histidinol + phosphate. It participates in amino-acid biosynthesis; L-histidine biosynthesis; L-histidine from 5-phospho-alpha-D-ribose 1-diphosphate: step 6/9. The protein operates within amino-acid biosynthesis; L-histidine biosynthesis; L-histidine from 5-phospho-alpha-D-ribose 1-diphosphate: step 8/9. In Buchnera aphidicola subsp. Baizongia pistaciae (strain Bp), this protein is Histidine biosynthesis bifunctional protein HisB.